The following is a 402-amino-acid chain: Phosphoglycerate kinase (402 aa).

Residues 24 to 26 (DFN), R40, 63 to 66 (HFGR), R122, and R155 each bind substrate. ATP is bound by residues K206, G297, E328, and 358 to 361 (GGDS).

It belongs to the phosphoglycerate kinase family. Monomer.

The protein localises to the cytoplasm. It catalyses the reaction (2R)-3-phosphoglycerate + ATP = (2R)-3-phospho-glyceroyl phosphate + ADP. It participates in carbohydrate degradation; glycolysis; pyruvate from D-glyceraldehyde 3-phosphate: step 2/5. The protein is Phosphoglycerate kinase of Prochlorococcus marinus (strain AS9601).